A 385-amino-acid polypeptide reads, in one-letter code: Probable endopeptidase MT2245 (385 aa).

A compositionally biased stretch (pro residues) spans 235 to 257 (AALPPGAPPGDGPAPGVAPPPGG). Residues 235-268 (AALPPGAPPGDGPAPGVAPPPGGMPGLPFVQPDG) form a disordered region. A NlpC/P60 domain is found at 270-385 (GGDRTAVVQA…SGPIYDARRY (116 aa)). The Nucleophile role is filled by Cys-300. The active-site Proton acceptor is the His-348. His-360 is an active-site residue.

It belongs to the peptidase C40 family.

The sequence is that of Probable endopeptidase MT2245 from Mycobacterium tuberculosis (strain CDC 1551 / Oshkosh).